The following is a 201-amino-acid chain: Small ribosomal subunit protein uS4c (201 aa).

Residues 20 to 43 (GLTSKRPRAGSDLRNQSRSGKRSQ) are disordered. An S4 RNA-binding domain is found at 89–149 (MRLDNILFRL…NEQKSRALIQ (61 aa)).

Belongs to the universal ribosomal protein uS4 family. Part of the 30S ribosomal subunit. Contacts protein S5. The interaction surface between S4 and S5 is involved in control of translational fidelity.

Its subcellular location is the plastid. The protein localises to the chloroplast. Functionally, one of the primary rRNA binding proteins, it binds directly to 16S rRNA where it nucleates assembly of the body of the 30S subunit. With S5 and S12 plays an important role in translational accuracy. In Vitis vinifera (Grape), this protein is Small ribosomal subunit protein uS4c (rps4).